A 320-amino-acid chain; its full sequence is MAVAENVGVKVDSSNNQNIDNNTTSLVETKPSCSDDQTPKSKSSVLTNELIQRTSEVNLKSEISHLNPMAKEFVPSFLAQTHHSEFWGNRFWFTNHFPKQTIFLIGQFATMRRNFGKGRPWITKKTNLVQNEDMIKRTVYVSDIDNQVTEEQLASLFLSCGQVVDCRMCGDYKSILRFAFIEFTDAEGARSALRKSGTMFGSHPIRVFMSKTAIAPVNPSFLPQSKDELEKCGKTVYCTNIDKEVTKMELENFFKTVCGEVHHLRLLGDFYHQTRIAFVEFKLAESAISALNCSGVVLGELPIRVSPSKTPVRLHHSDLN.

The segment at 1 to 44 (MAVAENVGVKVDSSNNQNIDNNTTSLVETKPSCSDDQTPKSKSS) is disordered. Residues 12 to 44 (DSSNNQNIDNNTTSLVETKPSCSDDQTPKSKSS) show a composition bias toward polar residues. The short motif at 65-75 (HLNPMAKEFVP) is the PAM2-like element. 2 consecutive RRM domains span residues 137–212 (RTVY…MSKT) and 234–310 (KTVY…PSKT).

This Arabidopsis thaliana (Mouse-ear cress) protein is Polyadenylate-binding protein-interacting protein 13 (CID13).